The chain runs to 251 residues: Pyrroloquinoline-quinone synthase (251 aa).

This sequence belongs to the PqqC family.

It carries out the reaction 6-(2-amino-2-carboxyethyl)-7,8-dioxo-1,2,3,4,7,8-hexahydroquinoline-2,4-dicarboxylate + 3 O2 = pyrroloquinoline quinone + 2 H2O2 + 2 H2O + H(+). The protein operates within cofactor biosynthesis; pyrroloquinoline quinone biosynthesis. Ring cyclization and eight-electron oxidation of 3a-(2-amino-2-carboxyethyl)-4,5-dioxo-4,5,6,7,8,9-hexahydroquinoline-7,9-dicarboxylic-acid to PQQ. This chain is Pyrroloquinoline-quinone synthase, found in Pseudomonas putida (strain ATCC 47054 / DSM 6125 / CFBP 8728 / NCIMB 11950 / KT2440).